The primary structure comprises 129 residues: Small ribosomal subunit protein uS11 (129 aa).

The protein belongs to the universal ribosomal protein uS11 family. As to quaternary structure, part of the 30S ribosomal subunit. Interacts with proteins S7 and S18. Binds to IF-3.

Functionally, located on the platform of the 30S subunit, it bridges several disparate RNA helices of the 16S rRNA. Forms part of the Shine-Dalgarno cleft in the 70S ribosome. In Rhodopseudomonas palustris (strain HaA2), this protein is Small ribosomal subunit protein uS11.